The following is a 126-amino-acid chain: Large ribosomal subunit protein bL12 (126 aa).

It belongs to the bacterial ribosomal protein bL12 family. In terms of assembly, homodimer. Part of the ribosomal stalk of the 50S ribosomal subunit. Forms a multimeric L10(L12)X complex, where L10 forms an elongated spine to which 2 to 4 L12 dimers bind in a sequential fashion. Binds GTP-bound translation factors.

Its function is as follows. Forms part of the ribosomal stalk which helps the ribosome interact with GTP-bound translation factors. Is thus essential for accurate translation. This is Large ribosomal subunit protein bL12 from Tropheryma whipplei (strain TW08/27) (Whipple's bacillus).